The following is a 537-amino-acid chain: Serendipity locus protein alpha (537 aa).

The protein localises to the cytoplasm. It localises to the cell membrane. Required for the cellularization of the syncytial blastoderm embryo. Involved in the localization of the actin filaments just prior to and during plasma membrane invagination. Sry-alpha together with nullo and bnk may provide auxiliary functions, by acting both to stabilize a large and dynamic microfilament structure and regulate its functions. The sequence is that of Serendipity locus protein alpha (Sry-alpha) from Drosophila virilis (Fruit fly).